A 473-amino-acid chain; its full sequence is 7-dehydrocholesterol reductase (473 aa).

The interval 1–20 is disordered; sequence MGERRRANASRGDKKVANGE. 6 helical membrane passes run 36 to 56, 97 to 117, 175 to 195, 264 to 284, 304 to 324, and 329 to 349; these read FSLA…YYFV, IYLA…DILH, WIPL…FALV, VTNS…DFFW, LGWG…LYLV, and ELST…YYIF. Residues Lys-356, Arg-360, Met-393, Trp-398, and 405 to 406 each bind NADP(+); that span reads NY. Residues 419 to 439 form a helical membrane-spanning segment; the sequence is ACGFDHLLPYFYFIYMTILLV. NADP(+) is bound by residues Asp-445, 449-453, and Tyr-460; that span reads CSSKY.

It belongs to the ERG4/ERG24 family.

The protein resides in the endoplasmic reticulum membrane. It catalyses the reaction cholesterol + NADP(+) = 7-dehydrocholesterol + NADPH + H(+). The catalysed reaction is 7-dehydrodesmosterol + NADPH + H(+) = desmosterol + NADP(+). Its pathway is steroid biosynthesis; cholesterol biosynthesis. Catalyzes the last step of the cholesterol synthesis pathway, which transforms cholesta-5,7-dien-3beta-ol (7-dehydrocholesterol,7-DHC) into cholesterol by reducing the C7-C8 double bond of its sterol core. Can also metabolize cholesta-5,7,24-trien-3beta-ol (7-dehydrodemosterol, 7-DHD) to desmosterol, which is then metabolized by the Delta(24)-sterol reductase (DHCR24) to cholesterol. Modulates ferroptosis (a form of regulated cell death driven by iron-dependent lipid peroxidation) through the metabolic breakdown of the anti-ferroptotic metabolites 7-DHC and 7-DHD which, when accumulated, divert the propagation of peroxyl radical-mediated damage from phospholipid components to its sterol core, protecting plasma and mitochondrial membranes from phospholipid autoxidation. This is 7-dehydrocholesterol reductase (dhcr7) from Xenopus laevis (African clawed frog).